The following is a 364-amino-acid chain: MKLIKLKLASFRNLQNIELAPGKKFNVFYGNNGQGKTNLLESIYLLATMKSFKQARNAELIAFAGEFALVKGTVERDQVRREIAVLIEKQGKKAKVDAKLMTRLDDFFGNLNVVLFTPEEISMVRGGPDLRRRYLDRAVFTCDLGYLTAYHDYAKILKNRNALLKVNETTGIEVWTEQLVQAALLVIERRKAYLDRIGKLLQGFYSEISGNDETVQIEYRLHGVDERLLAEDPAGALNQALRAHAAEERRRGTTAIGPHRDDLYFGLNGRSARQFASQGQQRSFVLALKMAEIEHITRCFEAPPVLLLDDMTSELDRERNRNLMEFLKKREMQVFITTTSLHNVDIDELQDNRTFRIKEGKILD.

30-37 contributes to the ATP binding site; sequence GNNGQGKT.

Belongs to the RecF family.

It localises to the cytoplasm. Its function is as follows. The RecF protein is involved in DNA metabolism; it is required for DNA replication and normal SOS inducibility. RecF binds preferentially to single-stranded, linear DNA. It also seems to bind ATP. The sequence is that of DNA replication and repair protein RecF from Citrifermentans bemidjiense (strain ATCC BAA-1014 / DSM 16622 / JCM 12645 / Bem) (Geobacter bemidjiensis).